The primary structure comprises 275 residues: MLKTYQKLLAMGIFLIVLCSGNAAFAATNQVGGLSNVGFFHDYLIEPFSALLKGVAGLFHGEYGLSIILVTIIVRIVVLPLFVNQFKKQRIFQEKMAVIKPQVDSIQVKLKKTKDPEKQKELQMEMMKLYQEHNINPLAMGCLPMLIQSPIMIGLYYAIRSTPEIASHSFLWFSLGQSDILMSLSAGIMYFVQAYIAQKLSAKYSAVPQNPAAQQSAKLMVFIFPVMMTIFSLNVPAALPLYWFTSGLFLTVQNIVLQMTHHKSKKTAALTESVK.

Positions 1-18 (MLKTYQKLLAMGIFLIVL) are cleaved as a signal peptide. A lipid anchor (N-palmitoyl cysteine) is attached at C19. C19 is lipidated: S-diacylglycerol cysteine. 5 consecutive transmembrane segments (helical) span residues 63-83 (YGLSIILVTIIVRIVVLPLFV), 139-159 (AMGCLPMLIQSPIMIGLYYAI), 172-192 (WFSLGQSDILMSLSAGIMYFV), 219-239 (LMVFIFPVMMTIFSLNVPAAL), and 240-260 (PLYWFTSGLFLTVQNIVLQMT).

It belongs to the OXA1/ALB3/YidC family. Type 2 subfamily. In terms of assembly, mostly monomeric, it may also form dimers. Interacts with SpoIIIAE. Forms a complex with the F(1)F(0) ATP synthase in which can be found the alpha, beta, gamma, delta and epsilon subunits of F(1) and a, b and subunits of F(0). YqgA is found in the same complex.

It is found in the cell membrane. Functionally, required for the insertion and/or proper folding and/or complex formation of integral membrane proteins into the membrane. Involved in integration of membrane proteins that insert both dependently and independently of the Sec translocase complex, as well as at least some lipoproteins. Also involved in protein secretion processes. It has an overlapping, although partly distinct, function compared to SpoIIIJ(MisCB). This is Membrane protein insertase MisCB (misCB) from Bacillus subtilis (strain 168).